Here is a 269-residue protein sequence, read N- to C-terminus: MISLKNFGLLFWKRFSENKLNQVAGALTYSTMLAIVPLVMVIFSIFSAFPVFNEVTGELKEMIFTNFAPSASDMVGEYIDQFVSNSKKMSAVGIVSLIAVALMLINNIDRTLNSIWHNSQSRSPLSSFAIYWMILTLGPLIIGVSIGISSYIKIMFEQSEHLSLGLKLLSFVPFLFTWFIFTLIYTVVPNKKVKIKHSAYGAFLAAIFFTLGKQAFTWYVVTFPSYQLIYGAMATLPIMLLWIQISWLVVLVGAQLASTLDEIGEQIEQ.

Helical transmembrane passes span M32–F52, M89–D109, F128–I148, L168–V188, F203–F223, and A232–V252.

The protein belongs to the UPF0761 family.

It is found in the cell inner membrane. In Haemophilus influenzae (strain 86-028NP), this protein is UPF0761 membrane protein NTHI0384.